Reading from the N-terminus, the 250-residue chain is MFRATCNTRDFKKVINATSNLVDEICFEVDENGIKASAMDPSHVALVSMEMPKEVFEEYEGDIHDIGIDLEALKKIIARGKGDEKLILDLDVEKNKLNVTFKSNVTRKFSIALYDVSSSNLKVPDIEYPNNVSIKAGAFVEALKDAELVNDHITLKVDEDKFIIYSKGDLNQSETVFDNGIEDDDATLAEFNMGEASRSTFNLAYLKDLTKSTAAEDLLKIYLGSDMPVKIEYEVSGSKLVFLLAPRIES.

Belongs to the PCNA family. In terms of assembly, homotrimer. The subunits circularize to form a toroid; DNA passes through its center. Replication factor C (RFC) is required to load the toroid on the DNA.

In terms of biological role, sliding clamp subunit that acts as a moving platform for DNA processing. Responsible for tethering the catalytic subunit of DNA polymerase and other proteins to DNA during high-speed replication. The protein is DNA polymerase sliding clamp of Methanococcus maripaludis (strain C6 / ATCC BAA-1332).